Reading from the N-terminus, the 339-residue chain is Uroporphyrinogen decarboxylase (339 aa).

Substrate is bound by residues 21–25 (RQAGR), Phe-40, Asp-71, Tyr-147, Ser-202, and His-315.

The protein belongs to the uroporphyrinogen decarboxylase family. As to quaternary structure, homodimer.

Its subcellular location is the cytoplasm. It carries out the reaction uroporphyrinogen III + 4 H(+) = coproporphyrinogen III + 4 CO2. It functions in the pathway porphyrin-containing compound metabolism; protoporphyrin-IX biosynthesis; coproporphyrinogen-III from 5-aminolevulinate: step 4/4. Catalyzes the decarboxylation of four acetate groups of uroporphyrinogen-III to yield coproporphyrinogen-III. The protein is Uroporphyrinogen decarboxylase of Helicobacter pylori (strain ATCC 700392 / 26695) (Campylobacter pylori).